The sequence spans 110 residues: Small ribosomal subunit protein uS17 (110 aa).

It belongs to the universal ribosomal protein uS17 family. Part of the 30S ribosomal subunit.

Its function is as follows. One of the primary rRNA binding proteins, it binds specifically to the 5'-end of 16S ribosomal RNA. This is Small ribosomal subunit protein uS17 from Haloquadratum walsbyi (strain DSM 16790 / HBSQ001).